Consider the following 284-residue polypeptide: tRNA (guanine-N(7)-)-methyltransferase (284 aa).

S-adenosyl-L-methionine-binding positions include Gly102, 125 to 126, 160 to 161, and Cys180; these read EI and NT. Asp183 is a catalytic residue. Residue 258-260 participates in S-adenosyl-L-methionine binding; the sequence is TEE.

This sequence belongs to the class I-like SAM-binding methyltransferase superfamily. TrmB family. Forms a complex with TRM82.

The protein localises to the nucleus. The enzyme catalyses guanosine(46) in tRNA + S-adenosyl-L-methionine = N(7)-methylguanosine(46) in tRNA + S-adenosyl-L-homocysteine. The protein operates within tRNA modification; N(7)-methylguanine-tRNA biosynthesis. Catalyzes the formation of N(7)-methylguanine at position 46 (m7G46) in tRNA. The polypeptide is tRNA (guanine-N(7)-)-methyltransferase (Podospora anserina (strain S / ATCC MYA-4624 / DSM 980 / FGSC 10383) (Pleurage anserina)).